The chain runs to 412 residues: Alpha-1-antitrypsin 1-3 (412 aa).

A signal peptide spans 1–24 (MTPSISWGLLLLAGLCCLVPSFLA). Residues asparagine 64, asparagine 101, and asparagine 265 are each glycosylated (N-linked (GlcNAc...) asparagine). The interval 368 to 387 (AVTVLLAVPYSMPPILRFDH) is RCL.

It belongs to the serpin family.

It localises to the secreted. In terms of biological role, inhibitor of serine proteases. Can inhibit trypsin and chymotrypsin; relatively ineffective against elastase. The protein is Alpha-1-antitrypsin 1-3 (Serpina1c) of Mus musculus (Mouse).